We begin with the raw amino-acid sequence, 368 residues long: MMKSEWNEEQIKELLSQLPAVKDHRSPQDIYKRLTMAKRKNKPAVRWIGPACAAAIAVYIAFIISPHFFDQAQPQQKEASQENAVTKTETEDSPKAASSLDQTSFVVPEKEQDNYITVAVADADTSAIIPVSIQKTNADQTIQDMLFESSELGILDHAITIPTFIDEVEIKEKPKQKELSIRVHQPATAFSIKDDTLLKKLLKESLKWSPYEKVKFLSDQNETGVRIGSYGTFTEISIPKQSKRSYYLYQNKQGQDFLVPSNHSFDTVKEAIKEMESSSQEDTTPLIQAGAVQSVTKKQKHLYIRFSKESEVDDSIAGILMIEGLLLTAKEFGFTEVTFTETRTKKIGKYDISDAIPVPAAPNPISLN.

Over residues 73–87 (QPQQKEASQENAVTK) the composition is skewed to polar residues. A disordered region spans residues 73–101 (QPQQKEASQENAVTKTETEDSPKAASSLD).

It is found in the cell membrane. Functionally, the anti-sigma factor for extracytoplasmic function (ECF) sigma factor SigX, inhibits SigX activity and stabilizes it. This Bacillus subtilis (strain 168) protein is Anti-sigma-X factor RsiX (rsiX).